The primary structure comprises 228 residues: MNRLKKLKKIRLHREGTSILIVSAILLIGINALLFWGIECKIPFYIFATASIVVYLLMVNFFRCPIRLFEHDTEKIVVAPADGRIVVIEEVDEHEYFHDRRLMISIFMSIVNVHANWYPVDGVVKHVDHHNGKFMKAWLPKASTENERSMVVIETPEGHTVMARQIAGAIARRIVTYAEVGEDCYIDEHMGFIKFGSRVDVYLPLGTEVCVKMGQATVGNETVIAKLK.

The active-site Schiff-base intermediate with substrate; via pyruvic acid is the S197. S197 carries the pyruvic acid (Ser); by autocatalysis modification.

Belongs to the phosphatidylserine decarboxylase family. PSD-A subfamily. As to quaternary structure, heterodimer of a large membrane-associated beta subunit and a small pyruvoyl-containing alpha subunit. The cofactor is pyruvate. In terms of processing, is synthesized initially as an inactive proenzyme. Formation of the active enzyme involves a self-maturation process in which the active site pyruvoyl group is generated from an internal serine residue via an autocatalytic post-translational modification. Two non-identical subunits are generated from the proenzyme in this reaction, and the pyruvate is formed at the N-terminus of the alpha chain, which is derived from the carboxyl end of the proenzyme. The post-translation cleavage follows an unusual pathway, termed non-hydrolytic serinolysis, in which the side chain hydroxyl group of the serine supplies its oxygen atom to form the C-terminus of the beta chain, while the remainder of the serine residue undergoes an oxidative deamination to produce ammonia and the pyruvoyl prosthetic group on the alpha chain.

The protein localises to the cell membrane. The catalysed reaction is a 1,2-diacyl-sn-glycero-3-phospho-L-serine + H(+) = a 1,2-diacyl-sn-glycero-3-phosphoethanolamine + CO2. Its pathway is phospholipid metabolism; phosphatidylethanolamine biosynthesis; phosphatidylethanolamine from CDP-diacylglycerol: step 2/2. In terms of biological role, catalyzes the formation of phosphatidylethanolamine (PtdEtn) from phosphatidylserine (PtdSer). This chain is Phosphatidylserine decarboxylase proenzyme, found in Phocaeicola vulgatus (strain ATCC 8482 / DSM 1447 / JCM 5826 / CCUG 4940 / NBRC 14291 / NCTC 11154) (Bacteroides vulgatus).